The following is a 209-amino-acid chain: Imidazoleglycerol-phosphate dehydratase (209 aa).

Belongs to the imidazoleglycerol-phosphate dehydratase family.

Its subcellular location is the cytoplasm. It catalyses the reaction D-erythro-1-(imidazol-4-yl)glycerol 3-phosphate = 3-(imidazol-4-yl)-2-oxopropyl phosphate + H2O. The protein operates within amino-acid biosynthesis; L-histidine biosynthesis; L-histidine from 5-phospho-alpha-D-ribose 1-diphosphate: step 6/9. This chain is Imidazoleglycerol-phosphate dehydratase, found in Microcystis aeruginosa (strain NIES-843 / IAM M-2473).